A 412-amino-acid chain; its full sequence is Lysosomal phospholipase A and acyltransferase (412 aa).

An N-terminal signal peptide occupies residues 1 to 33; that stretch reads MGLHLRPYRVGLLPDGLLFLLLLLMLLADPALP. Residue aspartate 46 participates in substrate binding. The cysteines at positions 65 and 89 are disulfide-linked. Asparagine 99 carries N-linked (GlcNAc...) asparagine glycosylation. The Acyl-ester intermediate role is filled by serine 198. Zn(2+) is bound at residue serine 198. Methionine 199 serves as a coordination point for substrate. Residues asparagine 273 and asparagine 289 are each glycosylated (N-linked (GlcNAc...) asparagine). Positions 340 and 355 each coordinate Zn(2+). Active-site charge relay system residues include aspartate 360 and histidine 392. Histidine 392 is a Zn(2+) binding site. Asparagine 398 carries an N-linked (GlcNAc...) asparagine glycan.

Belongs to the AB hydrolase superfamily. Lipase family. Post-translationally, N-glycosylated. N-glycosylation is important for maturation of the enzyme and normal subcellular location. As to expression, detected in blood plasma (at protein level). Ubiquitous. Highly expressed in heart, placenta, skeletal muscle, kidney and pancreas. Detected at lower levels in spleen, thymus, prostate, testis, ovary, small intestine, colon and peripheral blood leukocytes.

Its subcellular location is the lysosome. It localises to the secreted. It is found in the membrane. It catalyses the reaction a 1,2-diacyl-sn-glycero-3-phosphocholine + H2O = a 2-acyl-sn-glycero-3-phosphocholine + a fatty acid + H(+). The enzyme catalyses 1-hexadecanoyl-2-(9Z-octadecenoyl)-sn-glycero-3-phosphocholine + H2O = 2-(9Z-octadecenoyl)-sn-glycero-3-phosphocholine + hexadecanoate + H(+). It carries out the reaction 1-hexadecanoyl-2-glutaroyl-sn-glycero-3-phosphocholine + H2O = 2-glutaroyl-sn-glycero-3-phosphocholine + hexadecanoate + H(+). The catalysed reaction is 1-hexadecanoyl-2-nonadioyl-sn-glycero-3-phosphocholine + H2O = 2-nonadioyl-sn-glycero-3-phosphocholine + hexadecanoate + H(+). It catalyses the reaction 1-hexadecanoyl-2-(5-oxopentanoyl)-sn-glycero-3-phosphocholine + H2O = 2-(5-oxopentanoyl)-sn-glycero-3-phosphocholine + hexadecanoate + H(+). The enzyme catalyses 1-hexadecanoyl-2-(9-oxononanoyl)-sn-glycero-3-phosphocholine + H2O = 2-(9-oxononanoyl)-sn-glycero-3-phosphocholine + hexadecanoate + H(+). It carries out the reaction 1,2-dihexadecanoyl-sn-glycero-3-phosphocholine + H2O = 2-hexadecanoyl-sn-glycero-3-phosphocholine + hexadecanoate + H(+). The catalysed reaction is a 1,2-diacyl-sn-glycero-3-phosphocholine + H2O = a 1-acyl-sn-glycero-3-phosphocholine + a fatty acid + H(+). It catalyses the reaction 1,2-di-(9Z-octadecenoyl)-sn-glycero-3-phosphocholine + H2O = 1-(9Z-octadecenoyl)-sn-glycero-3-phosphocholine + (9Z)-octadecenoate + H(+). The enzyme catalyses 1-hexadecanoyl-2-(9Z-octadecenoyl)-sn-glycero-3-phosphocholine + H2O = 1-hexadecanoyl-sn-glycero-3-phosphocholine + (9Z)-octadecenoate + H(+). It carries out the reaction 1,2-dihexadecanoyl-sn-glycero-3-phosphocholine + H2O = 1-hexadecanoyl-sn-glycero-3-phosphocholine + hexadecanoate + H(+). The catalysed reaction is a 1-acyl-sn-glycero-3-phosphocholine + H2O = sn-glycerol 3-phosphocholine + a fatty acid + H(+). It catalyses the reaction 1-hexadecanoyl-sn-glycero-3-phosphocholine + H2O = sn-glycerol 3-phosphocholine + hexadecanoate + H(+). The enzyme catalyses N-(acetyl)-sphing-4-enine + a 1,2-diacyl-sn-glycero-3-phosphoethanolamine = 1-O-acyl-N-(acetyl)-sphing-4-enine + a 2-acyl-sn-glycero-3-phosphoethanolamine. It carries out the reaction 1-hexadecanoyl-2-(9Z-octadecenoyl)-sn-glycero-3-phosphoethanolamine + N-(acetyl)-sphing-4-enine = 2-(9Z-octadecenoyl)-sn-glycero-3-phosphoethanolamine + 1-hexadecanoyl-N-(acetyl)-sphing-4-enine. The catalysed reaction is 1-hexadecanoyl-2-(9Z,12Z-octadecadienoyl)-sn-glycero-3-phosphoethanolamine + N-(acetyl)-sphing-4-enine = 2-(9Z,12Z)-octadecadienoyl-sn-glycero-3-phosphoethanolamine + 1-hexadecanoyl-N-(acetyl)-sphing-4-enine. It catalyses the reaction 1-hexadecanoyl-2-(5Z,8Z,11Z,14Z-eicosatetraenoyl)-sn-glycero-3-phosphoethanolamine + N-(acetyl)-sphing-4-enine = 2-(5Z,8Z,11Z,14Z)-eicosatetraenoyl-sn-glycero-3-phosphoethanolamine + 1-hexadecanoyl-N-(acetyl)-sphing-4-enine. The enzyme catalyses N-(acetyl)-sphing-4-enine + a 1,2-diacyl-sn-glycero-3-phosphoethanolamine = 1-O-acyl-N-(acetyl)-sphing-4-enine + a 1-acyl-sn-glycero-3-phosphoethanolamine. It carries out the reaction 1-hexadecanoyl-2-(9Z-octadecenoyl)-sn-glycero-3-phosphoethanolamine + N-(acetyl)-sphing-4-enine = 1-(9Z-octadecenoyl)-N-(acetyl)-sphing-4-enine + 1-hexadecanoyl-sn-glycero-3-phosphoethanolamine. The catalysed reaction is 1-hexadecanoyl-2-(9Z,12Z-octadecadienoyl)-sn-glycero-3-phosphoethanolamine + N-(acetyl)-sphing-4-enine = 1-(9Z,12Z-octadecadienoyl)-N-acetylsphing-4-enine + 1-hexadecanoyl-sn-glycero-3-phosphoethanolamine. It catalyses the reaction 1-hexadecanoyl-2-(5Z,8Z,11Z,14Z-eicosatetraenoyl)-sn-glycero-3-phosphoethanolamine + N-(acetyl)-sphing-4-enine = 1-(5Z,8Z,11Z,14Z)-eicosatetraenoyl-N-(acetyl)-sphing-4-enine + 1-hexadecanoyl-sn-glycero-3-phosphoethanolamine. The enzyme catalyses N-(acetyl)-sphing-4-enine + a 1,2-diacyl-sn-glycero-3-phosphocholine = 1-O-acyl-N-(acetyl)-sphing-4-enine + a 1-acyl-sn-glycero-3-phosphocholine. It carries out the reaction 1-hexadecanoyl-2-(9Z-octadecenoyl)-sn-glycero-3-phosphocholine + N-(acetyl)-sphing-4-enine = 1-(9Z-octadecenoyl)-N-(acetyl)-sphing-4-enine + 1-hexadecanoyl-sn-glycero-3-phosphocholine. The catalysed reaction is 1-hexadecanoyl-2-(9Z,12Z-octadecadienoyl)-sn-glycero-3-phosphocholine + N-(acetyl)-sphing-4-enine = 1-(9Z,12Z-octadecadienoyl)-N-acetylsphing-4-enine + 1-hexadecanoyl-sn-glycero-3-phosphocholine. It catalyses the reaction 1-hexadecanoyl-2-(5Z,8Z,11Z,14Z-eicosatetraenoyl)-sn-glycero-3-phosphocholine + N-(acetyl)-sphing-4-enine = 1-(5Z,8Z,11Z,14Z)-eicosatetraenoyl-N-(acetyl)-sphing-4-enine + 1-hexadecanoyl-sn-glycero-3-phosphocholine. The enzyme catalyses 1-hexadecanoyl-2-(4Z,7Z,10Z,13Z,16Z,19Z-docosahexaenoyl)-sn-glycero-3-phosphocholine + N-(acetyl)-sphing-4-enine = 1-(4Z,7Z,10Z,13Z,16Z,19Z-docosahexaenoyl)-N-(acetyl)-sphing-4-enine + 1-hexadecanoyl-sn-glycero-3-phosphocholine. It carries out the reaction 1-octadecanoyl-2-(9Z-octadecenoyl)-sn-glycero-3-phosphocholine + N-(acetyl)-sphing-4-enine = 1-(9Z-octadecenoyl)-N-(acetyl)-sphing-4-enine + 1-octadecanoyl-sn-glycero-3-phosphocholine. The catalysed reaction is 1-octadecanoyl-2-(9Z,12Z)-octadecadienoyl-sn-glycero-3-phosphocholine + N-(acetyl)-sphing-4-enine = 1-(9Z,12Z-octadecadienoyl)-N-acetylsphing-4-enine + 1-octadecanoyl-sn-glycero-3-phosphocholine. It catalyses the reaction 1-octadecanoyl-2-(5Z,8Z,11Z,14Z-eicosatetraenoyl)-sn-glycero-3-phosphocholine + N-(acetyl)-sphing-4-enine = 1-(5Z,8Z,11Z,14Z)-eicosatetraenoyl-N-(acetyl)-sphing-4-enine + 1-octadecanoyl-sn-glycero-3-phosphocholine. The enzyme catalyses 1-(9Z-octadecenoyl)-2-hexadecanoyl-sn-glycero-3-phosphocholine + N-(acetyl)-sphing-4-enine = 1-hexadecanoyl-N-(acetyl)-sphing-4-enine + 1-(9Z-octadecenoyl)-sn-glycero-3-phosphocholine. It carries out the reaction 1-(9Z)-octadecenoyl-2-octadecanoyl-sn-glycero-3-phosphocholine + N-(acetyl)-sphing-4-enine = 1-octadecanoyl-N-(acetyl)-sphing-4-enine + 1-(9Z-octadecenoyl)-sn-glycero-3-phosphocholine. The catalysed reaction is 1,2-di-(9Z-octadecenoyl)-sn-glycero-3-phosphocholine + N-(acetyl)-sphing-4-enine = 1-(9Z-octadecenoyl)-N-(acetyl)-sphing-4-enine + 1-(9Z-octadecenoyl)-sn-glycero-3-phosphocholine. It catalyses the reaction N-(acetyl)-sphing-4-enine + a 1,2-diacyl-sn-glycero-3-phosphocholine = 1-O-acyl-N-(acetyl)-sphing-4-enine + a 2-acyl-sn-glycero-3-phosphocholine. The enzyme catalyses 1-hexadecanoyl-2-(9Z-octadecenoyl)-sn-glycero-3-phosphocholine + N-(acetyl)-sphing-4-enine = 1-hexadecanoyl-N-(acetyl)-sphing-4-enine + 2-(9Z-octadecenoyl)-sn-glycero-3-phosphocholine. It carries out the reaction 1-hexadecanoyl-2-(9Z,12Z-octadecadienoyl)-sn-glycero-3-phosphocholine + N-(acetyl)-sphing-4-enine = 2-(9Z,12Z-octadecadienoyl)-sn-glycero-3-phosphocholine + 1-hexadecanoyl-N-(acetyl)-sphing-4-enine. The catalysed reaction is 1-hexadecanoyl-2-(5Z,8Z,11Z,14Z-eicosatetraenoyl)-sn-glycero-3-phosphocholine + N-(acetyl)-sphing-4-enine = 1-hexadecanoyl-N-(acetyl)-sphing-4-enine + 2-(5Z,8Z,11Z,14Z)-eicosatetraenoyl-sn-glycero-3-phosphocholine. It catalyses the reaction 1-hexadecanoyl-2-(4Z,7Z,10Z,13Z,16Z,19Z-docosahexaenoyl)-sn-glycero-3-phosphocholine + N-(acetyl)-sphing-4-enine = 2-(4Z,7Z,10Z,13Z,16Z,19Z-docosahexaenoyl)-sn-glycero-3-phosphocholine + 1-hexadecanoyl-N-(acetyl)-sphing-4-enine. The enzyme catalyses 1-hexadecanoyl-2-nonadioyl-sn-glycero-3-phosphocholine + N-(acetyl)-sphing-4-enine = 2-nonadioyl-sn-glycero-3-phosphocholine + 1-hexadecanoyl-N-(acetyl)-sphing-4-enine. It carries out the reaction 1-octadecanoyl-2-(9Z-octadecenoyl)-sn-glycero-3-phosphocholine + N-(acetyl)-sphing-4-enine = 1-octadecanoyl-N-(acetyl)-sphing-4-enine + 2-(9Z-octadecenoyl)-sn-glycero-3-phosphocholine. The catalysed reaction is 1-octadecanoyl-2-(5Z,8Z,11Z,14Z-eicosatetraenoyl)-sn-glycero-3-phosphocholine + N-(acetyl)-sphing-4-enine = 1-octadecanoyl-N-(acetyl)-sphing-4-enine + 2-(5Z,8Z,11Z,14Z)-eicosatetraenoyl-sn-glycero-3-phosphocholine. It catalyses the reaction 1-(9Z-octadecenoyl)-2-hexadecanoyl-sn-glycero-3-phosphocholine + N-(acetyl)-sphing-4-enine = 1-(9Z-octadecenoyl)-N-(acetyl)-sphing-4-enine + 2-hexadecanoyl-sn-glycero-3-phosphocholine. The enzyme catalyses 1-(9Z)-octadecenoyl-2-octadecanoyl-sn-glycero-3-phosphocholine + N-(acetyl)-sphing-4-enine = 2-octadecanoyl-sn-glycero-3-phosphocholine + 1-(9Z-octadecenoyl)-N-(acetyl)-sphing-4-enine. It carries out the reaction a 1,2-diacyl-sn-glycero-3-phospho-L-serine + N-(acetyl)-sphing-4-enine = a 2-acyl-sn-glycero-3-phospho-L-serine + 1-O-acyl-N-(acetyl)-sphing-4-enine. The catalysed reaction is 1-octadecanoyl-2-(9Z-octadecenoyl)-sn-glycero-3-phospho-L-serine + N-(acetyl)-sphing-4-enine = 2-(9Z-octadecenoyl)-sn-glycero-3-phospho-L-serine + 1-octadecanoyl-N-(acetyl)-sphing-4-enine. It catalyses the reaction a 1,2-diacyl-sn-glycero-3-phospho-L-serine + N-(acetyl)-sphing-4-enine = 1-O-acyl-N-(acetyl)-sphing-4-enine + a 1-acyl-sn-glycero-3-phospho-L-serine. The enzyme catalyses 1-octadecanoyl-2-(9Z-octadecenoyl)-sn-glycero-3-phospho-L-serine + N-(acetyl)-sphing-4-enine = 1-octadecanoyl-sn-glycero-3-phosphoserine + 1-(9Z-octadecenoyl)-N-(acetyl)-sphing-4-enine. It carries out the reaction a 1,2-diacyl-sn-glycero-3-phospho-(1'-sn-glycerol) + N-(acetyl)-sphing-4-enine = 2-acyl-sn-glycero-3-phospho-(1'-sn-glycerol) + 1-O-acyl-N-(acetyl)-sphing-4-enine. The catalysed reaction is 1-octadecanoyl-2-(9Z-octadecenoyl)-sn-glycero-3-phospho-(1'-sn-glycerol) + N-(acetyl)-sphing-4-enine = 2-(9Z-octadecenoyl)-sn-glycero-3-phospho-(1'-sn-glycerol) + 1-octadecanoyl-N-(acetyl)-sphing-4-enine. It catalyses the reaction a 1,2-diacyl-sn-glycero-3-phospho-(1'-sn-glycerol) + N-(acetyl)-sphing-4-enine = 1-O-acyl-N-(acetyl)-sphing-4-enine + 1-acyl-sn-glycero-3-phospho-(1'-sn-glycerol). The enzyme catalyses 1-octadecanoyl-2-(9Z-octadecenoyl)-sn-glycero-3-phospho-(1'-sn-glycerol) + N-(acetyl)-sphing-4-enine = 1-octadecanoyl-sn-glycero-3-phospho-(1'-sn-glycerol) + 1-(9Z-octadecenoyl)-N-(acetyl)-sphing-4-enine. It carries out the reaction an N-acylethanolamine + a 1,2-diacyl-sn-glycero-3-phosphocholine = 2-(acylamino)ethyl fatty acid + a 2-acyl-sn-glycero-3-phosphocholine. The catalysed reaction is an N-acylethanolamine + a 1,2-diacyl-sn-glycero-3-phosphocholine = 2-(acylamino)ethyl fatty acid + a 1-acyl-sn-glycero-3-phosphocholine. It catalyses the reaction N-(5Z,8Z,11Z,14Z-eicosatetraenoyl)-ethanolamine + 1,2-di-(9Z-octadecenoyl)-sn-glycero-3-phosphocholine = 2-[(5Z,8Z,11Z,14Z)-eicosatetraenoylamino]ethyl (9Z)-octadecenoate + (9Z-octadecenoyl)-sn-glycero-3-phosphocholine. The enzyme catalyses N-(9Z-octadecenoyl) ethanolamine + 1,2-di-(9Z-octadecenoyl)-sn-glycero-3-phosphocholine = 2-[(9Z)-octadecenoylamino]ethyl (9Z)-octadecenoate + (9Z-octadecenoyl)-sn-glycero-3-phosphocholine. It carries out the reaction a 3-acyl-sn-glycerol + a 1,2-diacyl-sn-glycero-3-phosphocholine = a 1,3-diacylglycerol + a 1-acyl-sn-glycero-3-phosphocholine. The catalysed reaction is a 3-acyl-sn-glycerol + a 1,2-diacyl-sn-glycero-3-phosphocholine = a 1,3-diacylglycerol + a 2-acyl-sn-glycero-3-phosphocholine. It catalyses the reaction 3-(9Z-octadecenoyl)-sn-glycerol + 1,2-di-(9Z-octadecenoyl)-sn-glycero-3-phosphocholine = 1,3-di-(9Z-octadecenoyl)-glycerol + (9Z-octadecenoyl)-sn-glycero-3-phosphocholine. The enzyme catalyses 3-hexadecanoyl-sn-glycerol + 1,2-di-(9Z-octadecenoyl)-sn-glycero-3-phosphocholine = 1-(9Z)-octadecenoyl-3-hexadecanoyl-sn-glycerol + (9Z-octadecenoyl)-sn-glycero-3-phosphocholine. It carries out the reaction a 1-acyl-sn-glycerol + a 1,2-diacyl-sn-glycero-3-phosphocholine = a 1,3-diacylglycerol + a 2-acyl-sn-glycero-3-phosphocholine. The catalysed reaction is a 1-acyl-sn-glycerol + a 1,2-diacyl-sn-glycero-3-phosphocholine = a 1,3-diacylglycerol + a 1-acyl-sn-glycero-3-phosphocholine. It catalyses the reaction 1-(9Z-octadecenoyl)-sn-glycerol + 1,2-di-(9Z-octadecenoyl)-sn-glycero-3-phosphocholine = 1,3-di-(9Z-octadecenoyl)-glycerol + (9Z-octadecenoyl)-sn-glycero-3-phosphocholine. The enzyme catalyses 1-hexadecanoyl-sn-glycerol + 1,2-di-(9Z-octadecenoyl)-sn-glycero-3-phosphocholine = 1-hexadecanoyl-3-(9Z)-octadecenoyl-sn-glycerol + (9Z-octadecenoyl)-sn-glycero-3-phosphocholine. It carries out the reaction a 2-acylglycerol + a 1,2-diacyl-sn-glycero-3-phosphocholine = a 1,2-diacylglycerol + a 2-acyl-sn-glycero-3-phosphocholine. The catalysed reaction is a 2-acylglycerol + a 1,2-diacyl-sn-glycero-3-phosphocholine = a 1,2-diacylglycerol + a 1-acyl-sn-glycero-3-phosphocholine. It catalyses the reaction 2-hexadecanoylglycerol + 1,2-di-(9Z-octadecenoyl)-sn-glycero-3-phosphocholine = 1-(9Z)-octadecenoyl-2-hexadecanoylglycerol + (9Z-octadecenoyl)-sn-glycero-3-phosphocholine. The enzyme catalyses 1-O-alkylglycerol + a 1,2-diacyl-sn-glycero-3-phosphocholine = 1-O-alkyl-3-acylglycerol + a 1-acyl-sn-glycero-3-phosphocholine. It carries out the reaction 1-O-alkylglycerol + a 1,2-diacyl-sn-glycero-3-phosphocholine = 1-O-alkyl-3-acylglycerol + a 2-acyl-sn-glycero-3-phosphocholine. The catalysed reaction is 1-O-hexadecylglycerol + 1,2-di-(9Z-octadecenoyl)-sn-glycero-3-phosphocholine = 1-O-hexadecyl-3-(9Z)-octadecenoylglycerol + (9Z-octadecenoyl)-sn-glycero-3-phosphocholine. It catalyses the reaction 1-O-alkyl-2-acyl-sn-glycerol + a 1,2-diacyl-sn-glycero-3-phosphocholine = 1-O-alkyl-2,3-diacyl-sn-glycerol + a 2-acyl-sn-glycero-3-phosphocholine. The enzyme catalyses 1-O-alkyl-2-acyl-sn-glycerol + a 1,2-diacyl-sn-glycero-3-phosphocholine = 1-O-alkyl-2,3-diacyl-sn-glycerol + a 1-acyl-sn-glycero-3-phosphocholine. It carries out the reaction 1-O-hexadecyl-2-acetyl-sn-glycerol + 1,2-di-(9Z-octadecenoyl)-sn-glycero-3-phosphocholine = 1-O-hexadecyl-2-acetyl-3-(9Z)-octadecenoyl-sn-glycerol + (9Z-octadecenoyl)-sn-glycero-3-phosphocholine. The catalysed reaction is 1-O-hexadecyl-2-O-methyl-sn-glycerol + 1,2-di-(9Z-octadecenoyl)-sn-glycero-3-phosphocholine = 1-O-hexadecyl-2-O-methyl-3-(9Z)-octadecenoyl-sn-glycerol + (9Z-octadecenoyl)-sn-glycero-3-phosphocholine. It catalyses the reaction a 1,2-diacyl-sn-glycero-3-phosphoethanolamine + H2O = a 1-acyl-sn-glycero-3-phosphoethanolamine + a fatty acid + H(+). The enzyme catalyses 1-acyl-2-(5Z,8Z,11Z,14Z)-eicosatetraenoyl-sn-glycero-3-phosphoethanolamine + H2O = a 1-acyl-sn-glycero-3-phosphoethanolamine + (5Z,8Z,11Z,14Z)-eicosatetraenoate + H(+). It carries out the reaction a 1,2-diacyl-sn-glycero-3-phospho-(1'-sn-glycerol) + H2O = 1-acyl-sn-glycero-3-phospho-(1'-sn-glycerol) + a fatty acid + H(+). The catalysed reaction is 1-hexadecanoyl-2-(9Z-octadecenoyl)-sn-glycero-3-phospho-(1'-sn-glycerol) + H2O = 1-hexadecanoyl-sn-glycero-3-phospho-(1'-sn-glycerol) + (9Z)-octadecenoate + H(+). It catalyses the reaction a 1,2-diacyl-sn-glycero-3-phospho-(1'-sn-glycerol) + H2O = 2-acyl-sn-glycero-3-phospho-(1'-sn-glycerol) + a fatty acid + H(+). The enzyme catalyses 1-hexadecanoyl-2-(9Z-octadecenoyl)-sn-glycero-3-phospho-(1'-sn-glycerol) + H2O = 2-(9Z-octadecenoyl)-sn-glycero-3-phospho-(1'-sn-glycerol) + hexadecanoate + H(+). Its activity is regulated as follows. Inhibited by zinc ions at neutral pH. Zinc ions in plasma may keep the enzyme from hydrolyzing inappropriate substrates. Its function is as follows. Has dual calcium-independent phospholipase and O-acyltransferase activities with a potential role in glycerophospholipid homeostasis and remodeling of acyl groups of lipophilic alcohols present in acidic cellular compartments. Catalyzes hydrolysis of the ester bond of the fatty acyl group attached at sn-1 or sn-2 position of phospholipids (phospholipase A1 or A2 activity) and transfer it to the hydroxyl group at the first carbon of lipophilic alcohols (O-acyltransferase activity). Among preferred fatty acyl donors are phosphatidylcholines, phosphatidylethanolamines, phosphatidylglycerols and phosphatidylserines. Favors sn-2 over sn-1 deacylation of unsaturated fatty acyl groups of phosphatidylcholines, phosphatidylethanolamines, and phosphatidylglycerols. Among preferred fatty acyl acceptors are natural lipophilic alcohols including short-chain ceramide N-acetyl-sphingosine (C2 ceramide), alkylacylglycerols, monoacylglycerols, and acylethanolamides such as anandamide and oleoylethanolamide. Selectively hydrolyzes the sn-1 fatty acyl group of truncated oxidized phospholipids and may play a role in detoxification of reactive oxidized phospholipids during oxidative stress. Required for normal phospholipid degradation in alveolar macrophages with potential implications in the clearance of pulmonary surfactant, which is mainly composed of dipalmitoylphosphatidylcholine (1,2-dihexadecanoyl-sn-glycero-3-phosphocholine). Involved in the first step of bis(monoacylglycero)phosphate (BMP) de novo synthesis from phosphatidylglycerol (1,2-diacyl-sn-glycero-3-phospho-(1'-sn-glycerol), PG). BMP is an important player in cargo sorting and degradation, regulation of cellular cholesterol levels and intercellular communication. At neutral pH, hydrolyzes the sn-1 fatty acyl group of the lysophosphatidylcholines. The polypeptide is Lysosomal phospholipase A and acyltransferase (Homo sapiens (Human)).